A 388-amino-acid polypeptide reads, in one-letter code: Succinate--CoA ligase [ADP-forming] subunit beta (388 aa).

The ATP-grasp domain occupies 9–244; the sequence is KQLFAEYGLP…PSQDDAREAH (236 aa). ATP contacts are provided by residues Lys46, 53–55, Glu99, Thr102, and Glu107; that span reads GRG. Asn199 and Asp213 together coordinate Mg(2+). Residues Asn264 and 321–323 each bind substrate; that span reads GIV.

The protein belongs to the succinate/malate CoA ligase beta subunit family. As to quaternary structure, heterotetramer of two alpha and two beta subunits. It depends on Mg(2+) as a cofactor.

The enzyme catalyses succinate + ATP + CoA = succinyl-CoA + ADP + phosphate. It catalyses the reaction GTP + succinate + CoA = succinyl-CoA + GDP + phosphate. Its pathway is carbohydrate metabolism; tricarboxylic acid cycle; succinate from succinyl-CoA (ligase route): step 1/1. In terms of biological role, succinyl-CoA synthetase functions in the citric acid cycle (TCA), coupling the hydrolysis of succinyl-CoA to the synthesis of either ATP or GTP and thus represents the only step of substrate-level phosphorylation in the TCA. The beta subunit provides nucleotide specificity of the enzyme and binds the substrate succinate, while the binding sites for coenzyme A and phosphate are found in the alpha subunit. This chain is Succinate--CoA ligase [ADP-forming] subunit beta, found in Pseudomonas aeruginosa (strain UCBPP-PA14).